Consider the following 337-residue polypeptide: Phenylalanine--tRNA ligase alpha subunit (337 aa).

E258 contacts Mg(2+).

Belongs to the class-II aminoacyl-tRNA synthetase family. Phe-tRNA synthetase alpha subunit type 1 subfamily. Tetramer of two alpha and two beta subunits. Mg(2+) is required as a cofactor.

Its subcellular location is the cytoplasm. The enzyme catalyses tRNA(Phe) + L-phenylalanine + ATP = L-phenylalanyl-tRNA(Phe) + AMP + diphosphate + H(+). This chain is Phenylalanine--tRNA ligase alpha subunit, found in Burkholderia thailandensis (strain ATCC 700388 / DSM 13276 / CCUG 48851 / CIP 106301 / E264).